A 140-amino-acid polypeptide reads, in one-letter code: MTQPDIEIVIKEDFTYRECSDVANDVFKKTQWLLYVFLFIIFANCVVDVKYYFEGFSHSLLFVYFFLTLIILLVSFMGFHYLNSIPKPEAEPDYRKKQESKNQDFLKSQSNEPLEYASSSAVELEKEKNTREGLTILESS.

The next 2 helical transmembrane spans lie at Leu33 to Phe53 and Ser59 to Phe79. Residues Glu89–Asp104 are compositionally biased toward basic and acidic residues. The disordered stretch occupies residues Glu89–Ser140. The segment covering Phe105–Ala121 has biased composition (polar residues).

It is found in the membrane. This is an uncharacterized protein from Schizosaccharomyces pombe (strain 972 / ATCC 24843) (Fission yeast).